We begin with the raw amino-acid sequence, 745 residues long: 5-methyltetrahydropteroyltriglutamate--homocysteine methyltransferase (745 aa).

2 residues coordinate 5-methyltetrahydropteroyltri-L-glutamate: lysine 19 and asparagine 115. L-homocysteine is bound by residues isoleucine 420–serine 422 and glutamate 473. L-methionine is bound by residues isoleucine 420 to serine 422 and glutamate 473. 5-methyltetrahydropteroyltri-L-glutamate-binding positions include aspartate 478, tyrosine 501, arginine 504–alanine 505, and tryptophan 550. Aspartate 588 serves as a coordination point for L-homocysteine. Aspartate 588 serves as a coordination point for L-methionine. Zn(2+)-binding residues include histidine 630, cysteine 632, and glutamate 654. Histidine 683 functions as the Proton donor in the catalytic mechanism. Cysteine 715 contributes to the Zn(2+) binding site.

This sequence belongs to the vitamin-B12 independent methionine synthase family. The cofactor is Zn(2+).

It carries out the reaction 5-methyltetrahydropteroyltri-L-glutamate + L-homocysteine = tetrahydropteroyltri-L-glutamate + L-methionine. The protein operates within amino-acid biosynthesis; L-methionine biosynthesis via de novo pathway; L-methionine from L-homocysteine (MetE route): step 1/1. Catalyzes the transfer of a methyl group from 5-methyltetrahydrofolate to homocysteine resulting in methionine formation. The polypeptide is 5-methyltetrahydropteroyltriglutamate--homocysteine methyltransferase (Streptococcus mutans serotype c (strain ATCC 700610 / UA159)).